The primary structure comprises 592 residues: Frizzled-5 (592 aa).

A signal peptide spans 1–38 (MRKPADEHHFTMETSGMHLVGFWLHVLLLFQLSGLGDS). The Extracellular segment spans residues 39–248 (ASKDIVCEPI…QDERTFTTFW (210 aa)). The region spanning 40 to 161 (SKDIVCEPIT…GDTDRLCMDR (122 aa)) is the FZ domain. 5 disulfide bridges follow: cysteine 45–cysteine 106, cysteine 53–cysteine 99, cysteine 90–cysteine 128, cysteine 117–cysteine 158, and cysteine 121–cysteine 145. Residues 162–192 (NSSETTTLSPPFPKPTPKGTPRHRATAKSAP) are disordered. The chain crosses the membrane as a helical span at residues 249-269 (IGLWSVLCFVSTFTTVATFLI). Residues 270–280 (DMERFKYPERP) lie on the Cytoplasmic side of the membrane. Residues 281 to 301 (IIFLAACYLFVSLGYIVRLLA) traverse the membrane as a helical segment. The Extracellular segment spans residues 302 to 327 (GHERVACEGTGDQQHILYDTTGPALC). The helical transmembrane segment at 328-348 (TLVFLLIYFFGMASSIWWVVL) threads the bilayer. The Cytoplasmic portion of the chain corresponds to 349 to 370 (SFTWFLAAGMKWGNEAIAGYSQ). Residues 371-391 (YFHLAAWLVPSVKSIAVLALS) form a helical membrane-spanning segment. The Extracellular portion of the chain corresponds to 392–414 (SVDGDPVAGICYVGNQSLEGLRG). A helical membrane pass occupies residues 415 to 435 (FVLAPLVVYLFTGSLFLLAGF). The Cytoplasmic portion of the chain corresponds to 436 to 461 (VSLFRIRSVIKQGGTKTDKLEKLMIR). A helical membrane pass occupies residues 462-482 (IGLFTVLYTVPATIVVACLVY). Residues 483–512 (EQHYRPSWERALACSCPSERQRLGMGPDYA) are Extracellular-facing. The helical transmembrane segment at 513–533 (VFMLKYFMCLVVGITSGVWIW) threads the bilayer. The Cytoplasmic segment spans residues 534–592 (SGKTLESWRRFIARYVPCRTRKPPVSASSMYSEASTALTARAGTAPTGTYHKSAPSSHV).

It belongs to the G-protein coupled receptor Fz/Smo family.

The protein resides in the cell membrane. It localises to the golgi apparatus membrane. Its subcellular location is the synapse. The protein localises to the perikaryon. It is found in the cell projection. The protein resides in the dendrite. It localises to the axon. In terms of biological role, receptor for Wnt proteins. Following binding, activates the canonical Wnt/beta-catenin signaling pathway. Also activates wnt non-canonical signaling. In neurons, activation of the Wnt pathway promotes formation of synapses. May be involved in transduction and intercellular transmission of polarity information during tissue morphogenesis and/or in differentiated tissues. Plays a role in early eye development, possibly through wnt non-canonical signaling. As a receptor for wnt11, promotes eye formation, at least partially, by antagonizing the Wnt/beta-catenin pathway. In addition, promotes coherence of eye field cells, potentially contributing to the coordinated morphogenetic behaviors of cells in the nascent eye field. This is Frizzled-5 (fzd5) from Danio rerio (Zebrafish).